Consider the following 261-residue polypeptide: 3-methyl-2-oxobutanoate hydroxymethyltransferase (261 aa).

The Mg(2+) site is built by Asp42 and Asp81. 3-methyl-2-oxobutanoate-binding positions include 42–43, Asp81, and Lys110; that span reads DS. Mg(2+) is bound at residue Glu112. Catalysis depends on Glu179, which acts as the Proton acceptor.

The protein belongs to the PanB family. As to quaternary structure, homodecamer; pentamer of dimers. Mg(2+) serves as cofactor.

It localises to the cytoplasm. It catalyses the reaction 3-methyl-2-oxobutanoate + (6R)-5,10-methylene-5,6,7,8-tetrahydrofolate + H2O = 2-dehydropantoate + (6S)-5,6,7,8-tetrahydrofolate. It functions in the pathway cofactor biosynthesis; (R)-pantothenate biosynthesis; (R)-pantoate from 3-methyl-2-oxobutanoate: step 1/2. In terms of biological role, catalyzes the reversible reaction in which hydroxymethyl group from 5,10-methylenetetrahydrofolate is transferred onto alpha-ketoisovalerate to form ketopantoate. This chain is 3-methyl-2-oxobutanoate hydroxymethyltransferase, found in Thermus thermophilus (strain ATCC 27634 / DSM 579 / HB8).